The sequence spans 648 residues: Mitotic interactor and substrate of PLK1 (648 aa).

A Phosphoserine; by CDK1 modification is found at serine 77. A phosphothreonine mark is found at threonine 149 and threonine 190. The residue at position 220 (serine 220) is a Phosphoserine. Disordered regions lie at residues 242 to 383 and 430 to 460; these read VNDP…PEAR and KATE…GKAT. Phosphoserine; by CDK1 is present on serine 253. Residues 255–281 are compositionally biased toward basic and acidic residues; it reads ETPKETPIEREIRLAQEREAELREQRG. Threonine 256 carries the phosphothreonine; by CDK1 modification. Serine 318 is modified (phosphoserine). Basic and acidic residues predominate over residues 325–339; sequence MVQETQREEDHRREG. At threonine 347 the chain carries Phosphothreonine; by CDK1. A compositionally biased stretch (polar residues) spans 349 to 367; that stretch reads DWPSQDPQPGLQRSLSSDC. A phosphoserine mark is found at serine 352 and serine 364. 2 positions are modified to phosphoserine; by PLK1: serine 365 and serine 439. Polar residues predominate over residues 440 to 450; it reads ESSGRSLSSKQ. Phosphoserine is present on residues serine 507 and serine 509. The stretch at 511 to 534 forms a coiled coil; that stretch reads DLLEREMESVLRREREVAEERRNA. The interval 539–568 is disordered; the sequence is VFSPVPAEDESHEQDSRSSSRASGITGSYS. Position 541 is a phosphoserine; by CDK1 (serine 541). Serine 554 bears the Phosphoserine; by PLK1 mark. Polar residues predominate over residues 557–568; sequence SSRASGITGSYS. The residue at position 644 (serine 644) is a Phosphoserine.

Belongs to the MISP family. In terms of assembly, associates with F-actin. Interacts with DCTN1; this interaction regulates DCTN1 distribution at the cell cortex. Interacts with PTK2/FAK and MAPRE1. Phosphorylated by CDK1 and PLK1. CDK1 is the priming kinase for PLK1 phosphorylation. Phosphorylation by PLK1 is required for proper spindle orientation at metaphase.

It is found in the cell junction. The protein resides in the focal adhesion. The protein localises to the cytoplasm. Its subcellular location is the cytoskeleton. It localises to the cell cortex. In terms of biological role, plays a role in mitotic spindle orientation and mitotic progression. Regulates the distribution of dynactin at the cell cortex in a PLK1-dependent manner, thus stabilizing cortical and astral microtubule attachments required for proper mitotic spindle positioning. May link microtubules to the actin cytoskeleton and focal adhesions. May be required for directed cell migration and centrosome orientation. May also be necessary for proper stacking of the Golgi apparatus. The polypeptide is Mitotic interactor and substrate of PLK1 (Mus musculus (Mouse)).